A 208-amino-acid chain; its full sequence is Glycerol-3-phosphate acyltransferase 1 (208 aa).

A run of 5 helical transmembrane segments spans residues 52-72 (VVLM…YLLI), 77-97 (WVIL…WLDF), 112-132 (FLLP…LVFI), 140-160 (IALA…YGSH), and 161-181 (SEFA…KFVL).

Belongs to the PlsY family. In terms of assembly, probably interacts with PlsX.

It localises to the cell membrane. The enzyme catalyses an acyl phosphate + sn-glycerol 3-phosphate = a 1-acyl-sn-glycero-3-phosphate + phosphate. Its pathway is lipid metabolism; phospholipid metabolism. Catalyzes the transfer of an acyl group from acyl-phosphate (acyl-PO(4)) to glycerol-3-phosphate (G3P) to form lysophosphatidic acid (LPA). This enzyme utilizes acyl-phosphate as fatty acyl donor, but not acyl-CoA or acyl-ACP. This is Glycerol-3-phosphate acyltransferase 1 from Dehalococcoides mccartyi (strain ATCC BAA-2266 / KCTC 15142 / 195) (Dehalococcoides ethenogenes (strain 195)).